The sequence spans 2059 residues: Non-reducing polyketide synthase stmB (2059 aa).

In terms of domain architecture, Starter acyltransferase (SAT) spans 7–243; sequence LLFGDQTVEL…LKLAAYGAVH (237 aa). The Ketosynthase family 3 (KS3) domain maps to 366-796; sequence SNSIAIVGMA…GGNSCLILEE (431 aa). Residues C538, H673, and H713 each act as for beta-ketoacyl synthase activity in the active site. A Malonyl-CoA:ACP transacylase (MAT) domain is found at 895–1185; sequence WVFSGQGSQY…CGSMVKATLG (291 aa). The segment at 1273–1413 is N-terminal hotdog fold; the sequence is LHFVKKETVT…SASEWTDEWS (141 aa). The 309-residue stretch at 1273 to 1581 folds into the PKS/mFAS DH domain; the sequence is LHFVKKETVT…FQRMPRMVLH (309 aa). H1306 serves as the catalytic Proton acceptor; for dehydratase activity. The segment at 1435–1581 is C-terminal hotdog fold; it reads GDHLRRPVVY…FQRMPRMVLH (147 aa). D1495 acts as the Proton donor; for dehydratase activity in catalysis. The 78-residue stretch at 1619–1696 folds into the Carrier domain; sequence PPKHDLADQL…DARRALGGDE (78 aa). S1656 carries the post-translational modification O-(pantetheine 4'-phosphoryl)serine. Residues 1693–1727 form a disordered region; that stretch reads GGDETASESENDAEGDAPSDGGSPSGSWTPISPPE. Positions 1697-1709 are enriched in acidic residues; sequence TASESENDAEGDA. Positions 1710-1719 are enriched in low complexity; it reads PSDGGSPSGS. Positions 1778–2059 are thioesterase (TE) domain; sequence AVEYKSNVVL…LGKLLQEAVA (282 aa).

It depends on pantetheine 4'-phosphate as a cofactor.

It functions in the pathway mycotoxin biosynthesis. Functionally, non-reducing polyketide synthase; part of the gene cluster that mediates the biosynthesis of stromemycin, a depside C-glucoside with two unsaturated C9 side chains belonging to aromatic polyketide glycosides. The HR-PKS stmA and the NR-PKS stmB act as scaffold-generating enzymes responsible for the biosynthesis of the polyketide skeleton bininalkenylresorcylic acid. StmA condenses on acetyl-CoA starter unit with 4 malonyl-CoA units and the stmB uses 3 more malonyl-CoA units and catalyzes the depside bond formation. The glycoytransferase stmC then acts as the tailoring enzyme responsible for 3-C-glucosylation of bininalkenylresorcylic acid to yield stromemycin. In Aspergillus ustus, this protein is Non-reducing polyketide synthase stmB.